Reading from the N-terminus, the 184-residue chain is Ribosome-recycling factor (184 aa).

Belongs to the RRF family.

It localises to the cytoplasm. Functionally, responsible for the release of ribosomes from messenger RNA at the termination of protein biosynthesis. May increase the efficiency of translation by recycling ribosomes from one round of translation to another. This is Ribosome-recycling factor from Staphylococcus carnosus (strain TM300).